A 305-amino-acid chain; its full sequence is Sulfate adenylyltransferase subunit 2 (305 aa).

Belongs to the PAPS reductase family. CysD subfamily. In terms of assembly, heterodimer composed of CysD, the smaller subunit, and CysN.

It carries out the reaction sulfate + ATP + H(+) = adenosine 5'-phosphosulfate + diphosphate. It participates in sulfur metabolism; hydrogen sulfide biosynthesis; sulfite from sulfate: step 1/3. Its function is as follows. With CysN forms the ATP sulfurylase (ATPS) that catalyzes the adenylation of sulfate producing adenosine 5'-phosphosulfate (APS) and diphosphate, the first enzymatic step in sulfur assimilation pathway. APS synthesis involves the formation of a high-energy phosphoric-sulfuric acid anhydride bond driven by GTP hydrolysis by CysN coupled to ATP hydrolysis by CysD. In Pseudomonas fluorescens (strain SBW25), this protein is Sulfate adenylyltransferase subunit 2.